A 350-amino-acid polypeptide reads, in one-letter code: Pro-cathepsin H (350 aa).

The N-terminal stretch at 1-19 is a signal peptide; sequence MAQWTLLIVFFCVATAAAG. A propeptide spans 20–113 (activation peptide); the sequence is LSFHDSNPIR…WEEFRSHRLG (94 aa). An N-linked (GlcNAc...) asparagine glycan is attached at Asn117. A propeptide spans 122–132 (removed in mature form); the sequence is LKGNHRITDVV. Cystine bridges form between Cys154-Cys197 and Cys188-Cys230. Cys157 is a catalytic residue. Asn177 is a glycosylation site (N-linked (GlcNAc...) asparagine). N-linked (GlcNAc...) asparagine glycosylation occurs at Asn246. Residues Cys288 and Cys338 are joined by a disulfide bond. Residues His297 and Asn317 contribute to the active site.

It belongs to the peptidase C1 family. As to quaternary structure, interacts with KPI104 and KPI106. Composed of a mini chain and a large chain. The large chain may be split into heavy and light chain. All chains are held together by disulfide bonds.

Its subcellular location is the vacuole. The protein localises to the lysosome. It catalyses the reaction Hydrolysis of proteins, acting as an aminopeptidase (notably, cleaving Arg-|-Xaa bonds) as well as an endopeptidase.. Functionally, may play a role in proteolysis leading to mobilization of nitrogen during senescence and starvation. This chain is Pro-cathepsin H, found in Medicago truncatula (Barrel medic).